The chain runs to 563 residues: Arginine--tRNA ligase (563 aa).

A 'HIGH' region motif is present at residues 120-130 (PNIAKPFHIGH).

Belongs to the class-I aminoacyl-tRNA synthetase family. As to quaternary structure, monomer.

Its subcellular location is the cytoplasm. It catalyses the reaction tRNA(Arg) + L-arginine + ATP = L-arginyl-tRNA(Arg) + AMP + diphosphate. The chain is Arginine--tRNA ligase from Clostridium botulinum (strain Okra / Type B1).